The primary structure comprises 47 residues: PhoP/PhoQ regulator MgrB (47 aa).

Residues 6 to 26 (WVLLIVIIAGCLLLWTQMLNV) form a helical membrane-spanning segment.

It belongs to the MgrB family. May form homooligomers. Probably interacts with the periplasmic domain of PhoQ.

Its subcellular location is the cell inner membrane. In terms of biological role, phoP-regulated transcription is redox-sensitive, being activated when the periplasm becomes more reducing. MgrB acts between DsbA/DsbB and PhoP/PhoQ in this pathway. Represses PhoP/PhoQ signaling, possibly by binding to the periplasmic domain of PhoQ, altering its activity and that of downstream effector PhoP. This is PhoP/PhoQ regulator MgrB from Klebsiella pneumoniae (strain 342).